A 340-amino-acid chain; its full sequence is Oxygen-dependent coproporphyrinogen-III oxidase (340 aa).

The span at 1-14 (MTVSPTTQPQTNHS) shows a compositional bias: polar residues. The interval 1 to 22 (MTVSPTTQPQTNHSLPPADAKQ) is disordered. Ser-109 contributes to the substrate binding site. His-113 and His-123 together coordinate a divalent metal cation. His-123 serves as the catalytic Proton donor. 125–127 (NYR) is a substrate binding site. Positions 157 and 187 each coordinate a divalent metal cation. The segment at 278-313 (YVEFNLVYDRGTIFGLQTNGRTESILMSLPPLVRWQ) is important for dimerization. Position 296 to 298 (296 to 298 (NGR)) interacts with substrate.

The protein belongs to the aerobic coproporphyrinogen-III oxidase family. In terms of assembly, homodimer. A divalent metal cation serves as cofactor.

The protein localises to the cytoplasm. The enzyme catalyses coproporphyrinogen III + O2 + 2 H(+) = protoporphyrinogen IX + 2 CO2 + 2 H2O. The protein operates within porphyrin-containing compound metabolism; protoporphyrin-IX biosynthesis; protoporphyrinogen-IX from coproporphyrinogen-III (O2 route): step 1/1. In terms of biological role, involved in the heme and chlorophyll biosynthesis. Catalyzes the aerobic oxidative decarboxylation of propionate groups of rings A and B of coproporphyrinogen-III to yield the vinyl groups in protoporphyrinogen-IX. The chain is Oxygen-dependent coproporphyrinogen-III oxidase from Synechocystis sp. (strain ATCC 27184 / PCC 6803 / Kazusa).